A 163-amino-acid polypeptide reads, in one-letter code: Halocyanin (163 aa).

Positions 1-24 (MKDISRRRFVLGTGATVAAATLAG) are cleaved as a signal peptide. Residue Cys25 is modified to N-acetylcysteine. Cys25 carries the S-archaeol cysteine lipid modification. Residues 26-38 (NGNGNGNGNGNGN) are compositionally biased toward gly residues. The interval 26-48 (NGNGNGNGNGNGNGEPDTPEGRA) is disordered. The Plastocyanin-like domain occupies 48–163 (ADQFLTDNDA…QGMYGAVIVE (116 aa)). Cu cation contacts are provided by His110, Cys148, His151, and Met156.

The protein resides in the cell membrane. In terms of biological role, electron donor. Binds one copper ion. The sequence is that of Halocyanin (hcy) from Natronomonas pharaonis (Natronobacterium pharaonis).